We begin with the raw amino-acid sequence, 196 residues long: Carnitine operon protein CaiE (196 aa).

Positions 173-196 (TQPLRQMEENRPRLQGTTDVTPKR) are disordered. Over residues 187-196 (QGTTDVTPKR) the composition is skewed to polar residues.

This sequence belongs to the transferase hexapeptide repeat family.

It functions in the pathway amine and polyamine metabolism; carnitine metabolism. Overproduction of CaiE stimulates the activity of CaiB and CaiD. The chain is Carnitine operon protein CaiE from Escherichia coli O7:K1 (strain IAI39 / ExPEC).